A 633-amino-acid chain; its full sequence is Glutamyl-tRNA(Gln) amidotransferase subunit E (633 aa).

The interval 415-437 is disordered; it reads LDDGTTKFLRPQPGSARMYPETD.

Belongs to the GatB/GatE family. GatE subfamily. In terms of assembly, heterodimer of GatD and GatE.

It carries out the reaction L-glutamyl-tRNA(Gln) + L-glutamine + ATP + H2O = L-glutaminyl-tRNA(Gln) + L-glutamate + ADP + phosphate + H(+). Functionally, allows the formation of correctly charged Gln-tRNA(Gln) through the transamidation of misacylated Glu-tRNA(Gln) in organisms which lack glutaminyl-tRNA synthetase. The reaction takes place in the presence of glutamine and ATP through an activated gamma-phospho-Glu-tRNA(Gln). The GatDE system is specific for glutamate and does not act on aspartate. The sequence is that of Glutamyl-tRNA(Gln) amidotransferase subunit E from Saccharolobus solfataricus (strain ATCC 35092 / DSM 1617 / JCM 11322 / P2) (Sulfolobus solfataricus).